Reading from the N-terminus, the 156-residue chain is Ribosomal RNA large subunit methyltransferase H (156 aa).

S-adenosyl-L-methionine contacts are provided by residues L73, G104, and 123–128 (ISSLTL).

The protein belongs to the RNA methyltransferase RlmH family. Homodimer.

Its subcellular location is the cytoplasm. The enzyme catalyses pseudouridine(1915) in 23S rRNA + S-adenosyl-L-methionine = N(3)-methylpseudouridine(1915) in 23S rRNA + S-adenosyl-L-homocysteine + H(+). Its function is as follows. Specifically methylates the pseudouridine at position 1915 (m3Psi1915) in 23S rRNA. This is Ribosomal RNA large subunit methyltransferase H from Herminiimonas arsenicoxydans.